Reading from the N-terminus, the 131-residue chain is MTQAVEYKGLGRRKSSVARVIIRPGKGEFHINKRPAREYLTSDLYLKDANQPFVLTETFQKFDTFVNVKGGGLNGQAGAIRLGIARALLHASPDYRTKLKAEGMLTRDARIKERKKPGLRAARRARQFSKR.

Belongs to the universal ribosomal protein uS9 family.

The chain is Small ribosomal subunit protein uS9 from Mycoplasmopsis synoviae (strain 53) (Mycoplasma synoviae).